A 591-amino-acid polypeptide reads, in one-letter code: Protein NRT1/ PTR FAMILY 1.1 (591 aa).

The next 11 helical transmembrane spans lie at 68–88 (TVLF…AFLS), 98–118 (IVIA…TAML), 139–159 (SSQL…SGGI), 186–206 (FFGW…TVIV), 216–236 (IGFG…VFAS), 329–349 (LKAL…SINV), 374–394 (IPAG…VVLY), 418–438 (MGLG…VEHY), 460–480 (AMWL…TGIG), 496–516 (IAAS…SVIL), and 543–563 (YYWV…VCSW).

It belongs to the major facilitator superfamily. Proton-dependent oligopeptide transporter (POT/PTR) (TC 2.A.17) family. As to expression, expressed in siliques, shoots and roots. Mainly detected in larger expanded leaves, in the companion cells of major veins.

It is found in the cell membrane. Functionally, low-affinity nitrate transporter involved in xylem-to-phloem transfer for redistributing nitrate into developing leaves. Not involved in dipeptides transport. The protein is Protein NRT1/ PTR FAMILY 1.1 (NPF1.1) of Arabidopsis thaliana (Mouse-ear cress).